Consider the following 918-residue polypeptide: Isoleucine--tRNA ligase (918 aa).

The 'HIGH' region motif lies at 57–67 (PYANGHIHIGH). Position 564 (glutamate 564) interacts with L-isoleucyl-5'-AMP. A 'KMSKS' region motif is present at residues 605–609 (KMSKS). Lysine 608 lines the ATP pocket. Zn(2+) contacts are provided by cysteine 888, cysteine 891, cysteine 903, and cysteine 906.

The protein belongs to the class-I aminoacyl-tRNA synthetase family. IleS type 1 subfamily. Monomer. The cofactor is Zn(2+).

It localises to the cytoplasm. The enzyme catalyses tRNA(Ile) + L-isoleucine + ATP = L-isoleucyl-tRNA(Ile) + AMP + diphosphate. Its function is as follows. Catalyzes the attachment of isoleucine to tRNA(Ile). As IleRS can inadvertently accommodate and process structurally similar amino acids such as valine, to avoid such errors it has two additional distinct tRNA(Ile)-dependent editing activities. One activity is designated as 'pretransfer' editing and involves the hydrolysis of activated Val-AMP. The other activity is designated 'posttransfer' editing and involves deacylation of mischarged Val-tRNA(Ile). In Nitratiruptor sp. (strain SB155-2), this protein is Isoleucine--tRNA ligase.